The primary structure comprises 75 residues: Putative defensin-like protein 271 (75 aa).

Positions 1–23 (MTSMKLHIVALCIIVSFLVNVQS) are cleaved as a signal peptide. Disulfide bonds link Cys33–Cys72, Cys39–Cys61, Cys45–Cys70, and Cys49–Cys71.

It belongs to the DEFL family.

The protein localises to the secreted. This is Putative defensin-like protein 271 from Arabidopsis thaliana (Mouse-ear cress).